The primary structure comprises 122 residues: Large ribosomal subunit protein uL14 (122 aa).

Belongs to the universal ribosomal protein uL14 family. In terms of assembly, part of the 50S ribosomal subunit. Forms a cluster with proteins L3 and L19. In the 70S ribosome, L14 and L19 interact and together make contacts with the 16S rRNA in bridges B5 and B8.

Functionally, binds to 23S rRNA. Forms part of two intersubunit bridges in the 70S ribosome. In Lactococcus lactis subsp. lactis (strain IL1403) (Streptococcus lactis), this protein is Large ribosomal subunit protein uL14.